The sequence spans 355 residues: Receptor-like serine/threonine-protein kinase At1g78530 (355 aa).

Topologically, residues 1 to 8 are extracellular; the sequence is MANAKETT. Residues 9-29 traverse the membrane as a helical segment; that stretch reads FYITISVVAFVIGKIVIALLF. Topologically, residues 30 to 355 are cytoplasmic; the sequence is YKRWKRKHTI…YIKLSTRSSF (326 aa). The Protein kinase domain occupies 75-347; sequence LSNKDILGSG…TEVVKLLEYI (273 aa). ATP contacts are provided by residues 81–89 and lysine 103; that span reads LGSGGFGTV. At tyrosine 148 the chain carries Phosphotyrosine. Aspartate 197 serves as the catalytic Proton acceptor. Phosphoserine occurs at positions 201 and 230. 2 positions are modified to phosphothreonine: threonine 231 and threonine 236. Tyrosine 244 is subject to Phosphotyrosine.

The protein belongs to the protein kinase superfamily. Ser/Thr protein kinase family.

The protein localises to the cell membrane. It carries out the reaction L-seryl-[protein] + ATP = O-phospho-L-seryl-[protein] + ADP + H(+). It catalyses the reaction L-threonyl-[protein] + ATP = O-phospho-L-threonyl-[protein] + ADP + H(+). This Arabidopsis thaliana (Mouse-ear cress) protein is Receptor-like serine/threonine-protein kinase At1g78530.